The following is a 387-amino-acid chain: Pepsin A (387 aa).

The first 16 residues, 1–16, serve as a signal peptide directing secretion; sequence MKKLLLLLGLVALSEC. Residues 17–61 constitute a propeptide, activation peptide; that stretch reads LYKVPLVKKKSLRQNLIENGLLKDFLAKHNVNPASKYFPTEAATE. One can recognise a Peptidase A1 domain in the interval 75 to 384; the sequence is YFGTIGIGTP…DRGNNRVGLA (310 aa). Residue aspartate 93 is part of the active site. A disulfide bond links cysteine 106 and cysteine 111. Serine 129 is subject to Phosphoserine. A disulfide bond links cysteine 267 and cysteine 271. The active site involves aspartate 276. An intrachain disulfide couples cysteine 310 to cysteine 343.

Belongs to the peptidase A1 family.

The protein resides in the secreted. It catalyses the reaction Preferential cleavage: hydrophobic, preferably aromatic, residues in P1 and P1' positions. Cleaves 1-Phe-|-Val-2, 4-Gln-|-His-5, 13-Glu-|-Ala-14, 14-Ala-|-Leu-15, 15-Leu-|-Tyr-16, 16-Tyr-|-Leu-17, 23-Gly-|-Phe-24, 24-Phe-|-Phe-25 and 25-Phe-|-Tyr-26 bonds in the B chain of insulin.. Its function is as follows. Shows particularly broad specificity; although bonds involving phenylalanine and leucine are preferred, many others are also cleaved to some extent. This chain is Pepsin A (PGA), found in Suncus murinus (Asian house shrew).